The sequence spans 382 residues: Dual-specificity RNA methyltransferase RlmN (382 aa).

Glu-96 acts as the Proton acceptor in catalysis. The Radical SAM core domain occupies 102–342 (QGKRGTLCVS…VRTTRGEDID (241 aa)). Cys-109 and Cys-345 are joined by a disulfide. [4Fe-4S] cluster is bound by residues Cys-116, Cys-120, and Cys-123. Residues 170–171 (GE), Ser-202, 224–226 (SLH), and Asn-302 contribute to the S-adenosyl-L-methionine site. Residue Cys-345 is the S-methylcysteine intermediate of the active site.

This sequence belongs to the radical SAM superfamily. RlmN family. [4Fe-4S] cluster serves as cofactor.

It is found in the cytoplasm. It catalyses the reaction adenosine(2503) in 23S rRNA + 2 reduced [2Fe-2S]-[ferredoxin] + 2 S-adenosyl-L-methionine = 2-methyladenosine(2503) in 23S rRNA + 5'-deoxyadenosine + L-methionine + 2 oxidized [2Fe-2S]-[ferredoxin] + S-adenosyl-L-homocysteine. The catalysed reaction is adenosine(37) in tRNA + 2 reduced [2Fe-2S]-[ferredoxin] + 2 S-adenosyl-L-methionine = 2-methyladenosine(37) in tRNA + 5'-deoxyadenosine + L-methionine + 2 oxidized [2Fe-2S]-[ferredoxin] + S-adenosyl-L-homocysteine. Specifically methylates position 2 of adenine 2503 in 23S rRNA and position 2 of adenine 37 in tRNAs. m2A2503 modification seems to play a crucial role in the proofreading step occurring at the peptidyl transferase center and thus would serve to optimize ribosomal fidelity. The protein is Dual-specificity RNA methyltransferase RlmN of Pseudomonas syringae pv. syringae (strain B728a).